We begin with the raw amino-acid sequence, 327 residues long: Undecaprenyl-phosphate 4-deoxy-4-formamido-L-arabinose transferase (327 aa).

Topologically, residues 1–235 (MFDAAPIKKV…TCLTTTPLRL (235 aa)) are cytoplasmic. A helical transmembrane segment spans residues 236–256 (LSLLGSVIAIGGFSLSVLLIV). At 257 to 269 (LRLALGPQWAAEG) the chain is on the periplasmic side. Residues 270–290 (VFMLFAVLFTFIGAQFIGMGL) traverse the membrane as a helical segment. Residues 291 to 327 (LGEYIGRIYNDVRARPRYFVQQVIYPESTSFTEESHQ) lie on the Cytoplasmic side of the membrane.

The protein belongs to the glycosyltransferase 2 family.

Its subcellular location is the cell inner membrane. The enzyme catalyses UDP-4-deoxy-4-formamido-beta-L-arabinose + di-trans,octa-cis-undecaprenyl phosphate = 4-deoxy-4-formamido-alpha-L-arabinopyranosyl di-trans,octa-cis-undecaprenyl phosphate + UDP. It participates in glycolipid biosynthesis; 4-amino-4-deoxy-alpha-L-arabinose undecaprenyl phosphate biosynthesis; 4-amino-4-deoxy-alpha-L-arabinose undecaprenyl phosphate from UDP-4-deoxy-4-formamido-beta-L-arabinose and undecaprenyl phosphate: step 1/2. The protein operates within bacterial outer membrane biogenesis; lipopolysaccharide biosynthesis. Functionally, catalyzes the transfer of 4-deoxy-4-formamido-L-arabinose from UDP to undecaprenyl phosphate. The modified arabinose is attached to lipid A and is required for resistance to polymyxin and cationic antimicrobial peptides. The protein is Undecaprenyl-phosphate 4-deoxy-4-formamido-L-arabinose transferase of Salmonella paratyphi A (strain ATCC 9150 / SARB42).